Here is a 458-residue protein sequence, read N- to C-terminus: Selection and upkeep of intraepithelial T-cells protein 3 (458 aa).

The signal sequence occupies residues 1–24 (MGSIQIIFAAYCVVLCVLQMLVLS). The Extracellular segment spans residues 25–237 (SEQFTITGLE…ESISIVLTGD (213 aa)). The Ig-like V-type domain maps to 26-141 (EQFTITGLER…EEHITEVKVT (116 aa)). 2 cysteine pairs are disulfide-bonded: C49–C123 and C163–C217. One can recognise an Ig-like C1-type domain in the interval 142 to 231 (ATSSDIKIIM…LLTHQEESIS (90 aa)). A glycan (N-linked (GlcNAc...) asparagine) is linked at N200. Residues 238-258 (LFSWKIDWILILSIIACVMIP) form a helical membrane-spanning segment. The Cytoplasmic portion of the chain corresponds to 259–283 (YSMTSYLQQHLIHGSCSQRSHHWRK). The chain crosses the membrane as a helical span at residues 284-304 (NAMVCMSSVIAIIGSMLILHL). The Extracellular portion of the chain corresponds to 305–324 (KQRVPISDQHFELDTLYLED). The helical transmembrane segment at 325–345 (ISVILCVVIVFNLKLNLLTYY) threads the bilayer. The Cytoplasmic segment spans residues 346-359 (RLERKYDGCTPGCK). Residues 360 to 380 (ACFYILKIIIIILPFVFTFGC) traverse the membrane as a helical segment. Topologically, residues 381 to 414 (YNAIFLKYHQLQKKVSIPDPLYYFYTSWLVNMEM) are extracellular. Residues 415–435 (LGVFLVFFPTFINLIEFSQFI) traverse the membrane as a helical segment. Residues 436-458 (KTVPKPIWLCQENMREDDAIRHR) lie on the Cytoplasmic side of the membrane.

It belongs to the SKINT family. In terms of tissue distribution, expressed in skin and thymus.

The protein localises to the membrane. May act by engaging a cell surface molecule on immature T-cells in the embryonic thymus. This is Selection and upkeep of intraepithelial T-cells protein 3 (Skint3) from Mus musculus (Mouse).